We begin with the raw amino-acid sequence, 90 residues long: DNA-binding protein HU-beta (90 aa).

It belongs to the bacterial histone-like protein family. As to quaternary structure, heterodimer of an alpha and a beta chain.

Functionally, histone-like DNA-binding protein which is capable of wrapping DNA to stabilize it, and thus to prevent its denaturation under extreme environmental conditions. The protein is DNA-binding protein HU-beta (hupB) of Pseudomonas aeruginosa (strain ATCC 15692 / DSM 22644 / CIP 104116 / JCM 14847 / LMG 12228 / 1C / PRS 101 / PAO1).